Reading from the N-terminus, the 231-residue chain is Membrane protein YknW (231 aa).

Transmembrane regions (helical) follow at residues 38–58 (VWGP…LQSL), 93–113 (GAII…WLCV), 128–148 (LSLF…IVAF), 171–191 (LASV…LLAI), and 205–225 (WISA…SGLI).

Interacts with a complex composed of YknX, YknY and YknZ.

It is found in the cell membrane. Its function is as follows. Part of an unusual four-component transporter, which is required for protection against the killing factor SdpC (sporulation-delaying protein). Has a role in the assembly of the YknXYZ complex. The chain is Membrane protein YknW (yknW) from Bacillus subtilis (strain 168).